The following is a 663-amino-acid chain: 4-hydroxy-3-methylbut-2-en-1-yl diphosphate synthase (flavodoxin) (663 aa).

[4Fe-4S] cluster contacts are provided by cysteine 568, cysteine 571, cysteine 602, and glutamate 609.

It belongs to the IspG family. Requires [4Fe-4S] cluster as cofactor.

The enzyme catalyses (2E)-4-hydroxy-3-methylbut-2-enyl diphosphate + oxidized [flavodoxin] + H2O + 2 H(+) = 2-C-methyl-D-erythritol 2,4-cyclic diphosphate + reduced [flavodoxin]. The protein operates within isoprenoid biosynthesis; isopentenyl diphosphate biosynthesis via DXP pathway; isopentenyl diphosphate from 1-deoxy-D-xylulose 5-phosphate: step 5/6. Functionally, converts 2C-methyl-D-erythritol 2,4-cyclodiphosphate (ME-2,4cPP) into 1-hydroxy-2-methyl-2-(E)-butenyl 4-diphosphate. The chain is 4-hydroxy-3-methylbut-2-en-1-yl diphosphate synthase (flavodoxin) from Leptospira interrogans serogroup Icterohaemorrhagiae serovar copenhageni (strain Fiocruz L1-130).